Reading from the N-terminus, the 150-residue chain is Small ribosomal subunit protein eS19 (150 aa).

The protein belongs to the eukaryotic ribosomal protein eS19 family. Part of the 30S ribosomal subunit.

Functionally, may be involved in maturation of the 30S ribosomal subunit. This Thermoplasma acidophilum (strain ATCC 25905 / DSM 1728 / JCM 9062 / NBRC 15155 / AMRC-C165) protein is Small ribosomal subunit protein eS19.